The primary structure comprises 581 residues: UvrABC system protein C (581 aa).

One can recognise a GIY-YIG domain in the interval 15-94 (REPGVYLFEQ…IKRHRPPYNV (80 aa)). The UVR domain occupies 202–237 (GVLADPLRREMEAAAQNQEFERAANLRDKLGAVEAL).

Belongs to the UvrC family. In terms of assembly, interacts with UvrB in an incision complex.

It localises to the cytoplasm. Functionally, the UvrABC repair system catalyzes the recognition and processing of DNA lesions. UvrC both incises the 5' and 3' sides of the lesion. The N-terminal half is responsible for the 3' incision and the C-terminal half is responsible for the 5' incision. This Haloarcula marismortui (strain ATCC 43049 / DSM 3752 / JCM 8966 / VKM B-1809) (Halobacterium marismortui) protein is UvrABC system protein C.